Here is a 147-residue protein sequence, read N- to C-terminus: D-aminoacyl-tRNA deacylase (147 aa).

The short motif at 136-137 (GP) is the Gly-cisPro motif, important for rejection of L-amino acids element.

It belongs to the DTD family. As to quaternary structure, homodimer.

It is found in the cytoplasm. The enzyme catalyses glycyl-tRNA(Ala) + H2O = tRNA(Ala) + glycine + H(+). It catalyses the reaction a D-aminoacyl-tRNA + H2O = a tRNA + a D-alpha-amino acid + H(+). An aminoacyl-tRNA editing enzyme that deacylates mischarged D-aminoacyl-tRNAs. Also deacylates mischarged glycyl-tRNA(Ala), protecting cells against glycine mischarging by AlaRS. Acts via tRNA-based rather than protein-based catalysis; rejects L-amino acids rather than detecting D-amino acids in the active site. By recycling D-aminoacyl-tRNA to D-amino acids and free tRNA molecules, this enzyme counteracts the toxicity associated with the formation of D-aminoacyl-tRNA entities in vivo and helps enforce protein L-homochirality. This Streptococcus equi subsp. zooepidemicus (strain H70) protein is D-aminoacyl-tRNA deacylase.